Reading from the N-terminus, the 131-residue chain is Conotoxin Cal8.2 (131 aa).

The signal sequence occupies residues 1–19; the sequence is MKLLLTLLLGSALMCITLA. Positions 20–38 are excised as a propeptide; that stretch reads DECGLGTHRPVKEVIDNVR.

In terms of processing, contains 4 disulfide bonds. In terms of tissue distribution, expressed by the venom duct.

It is found in the secreted. In terms of biological role, probable neurotoxin with unknown target. Possibly targets ion channels. The chain is Conotoxin Cal8.2 from Californiconus californicus (California cone).